A 274-amino-acid polypeptide reads, in one-letter code: MLSVAARSGPFAPVLSATSRGVAGALRPLVQAAVPATSEPPVLDLKRPFLSRESLSGQAVRRPLVASVGLNVPASVCYSHTDVKVPDFCDYRRPEVLDSTKSSRESSEARKSFSYMVTAVTTVGVAYAAKNAVTQFVSSMSASADVLAMAKIEVKLSDIPEGKNMAFKWRGKPLFVRHRTQKEIEQEAAVELSQLRDPQHDLDRVKKPEWVILIGVCTHLGCVPIANAGDFGGYYCPCHGSHYDASGRIRLGPAPLNLEVPTYEFTSDDMVVVG.

The Mitochondrial matrix portion of the chain corresponds to 79 to 103 (SHTDVKVPDFCDYRRPEVLDSTKSS). The chain crosses the membrane as a helical span at residues 104–140 (RESSEARKSFSYMVTAVTTVGVAYAAKNAVTQFVSSM). Over 141 to 274 (SASADVLAMA…FTSDDMVVVG (134 aa)) the chain is Mitochondrial intermembrane. In terms of domain architecture, Rieske spans 187–272 (EAAVELSQLR…YEFTSDDMVV (86 aa)). The [2Fe-2S] cluster site is built by cysteine 217, histidine 219, cysteine 236, histidine 239, and serine 241. A disulfide bridge links cysteine 222 with cysteine 238.

It belongs to the Rieske iron-sulfur protein family. In terms of assembly, component of the ubiquinol-cytochrome c oxidoreductase (cytochrome b-c1 complex, complex III, CIII), a multisubunit enzyme composed of 11 subunits. The complex is composed of 3 respiratory subunits cytochrome b, cytochrome c1 and Rieske protein UQCRFS1, 2 core protein subunits UQCRC1/QCR1 and UQCRC2/QCR2, and 6 low-molecular weight protein subunits UQCRH/QCR6, UQCRB/QCR7, UQCRQ/QCR8, UQCR10/QCR9, UQCR11/QCR10 and subunit 9, the cleavage product of Rieske protein UQCRFS1. The complex exists as an obligatory dimer and forms supercomplexes (SCs) in the inner mitochondrial membrane with NADH-ubiquinone oxidoreductase (complex I, CI) and cytochrome c oxidase (complex IV, CIV), resulting in different assemblies (supercomplex SCI(1)III(2)IV(1) and megacomplex MCI(2)III(2)IV(2)). Incorporation of the Rieske protein UQCRFS1 is the penultimate step in complex III assembly. Interacts with TTC19, which is involved in the clearance of UQCRFS1 fragments. As to quaternary structure, component of the ubiquinol-cytochrome c oxidoreductase (cytochrome b-c1 complex, complex III, CIII). Subunit 9 corresponds to the mitochondrial targeting sequence (MTS) of Rieske protein UQCRFS1. It is retained after processing and incorporated inside complex III, where it remains bound to the complex and localizes between the 2 core subunits UQCRC1/QCR1 and UQCRC2/QCR2. [2Fe-2S] cluster serves as cofactor. Proteolytic processing is necessary for the correct insertion of UQCRFS1 in the complex III dimer. Several fragments are generated during UQCRFS1 insertion, most probably due to the endogenous matrix-processing peptidase (MPP) activity of the 2 core protein subunits UQCRC1/QCR1 and UQCRC2/QCR2, which are homologous to the 2 mitochondrial-processing peptidase (MPP) subunits beta-MPP and alpha-MPP respectively. The action of the protease is also necessary for the clearance of the UQCRFS1 fragments.

Its subcellular location is the mitochondrion inner membrane. The catalysed reaction is a quinol + 2 Fe(III)-[cytochrome c](out) = a quinone + 2 Fe(II)-[cytochrome c](out) + 2 H(+)(out). In terms of biological role, component of the ubiquinol-cytochrome c oxidoreductase, a multisubunit transmembrane complex that is part of the mitochondrial electron transport chain which drives oxidative phosphorylation. The respiratory chain contains 3 multisubunit complexes succinate dehydrogenase (complex II, CII), ubiquinol-cytochrome c oxidoreductase (cytochrome b-c1 complex, complex III, CIII) and cytochrome c oxidase (complex IV, CIV), that cooperate to transfer electrons derived from NADH and succinate to molecular oxygen, creating an electrochemical gradient over the inner membrane that drives transmembrane transport and the ATP synthase. The cytochrome b-c1 complex catalyzes electron transfer from ubiquinol to cytochrome c, linking this redox reaction to translocation of protons across the mitochondrial inner membrane, with protons being carried across the membrane as hydrogens on the quinol. In the process called Q cycle, 2 protons are consumed from the matrix, 4 protons are released into the intermembrane space and 2 electrons are passed to cytochrome c. The Rieske protein is a catalytic core subunit containing a [2Fe-2S] iron-sulfur cluster. It cycles between 2 conformational states during catalysis to transfer electrons from the quinol bound in the Q(0) site in cytochrome b to cytochrome c1. Incorporation of UQCRFS1 is the penultimate step in complex III assembly. Component of the ubiquinol-cytochrome c oxidoreductase (cytochrome b-c1 complex, complex III, CIII). UQCRFS1 undergoes proteolytic processing once it is incorporated in the complex III dimer. One of the fragments, called subunit 9, corresponds to its mitochondrial targeting sequence (MTS). The proteolytic processing is necessary for the correct insertion of UQCRFS1 in the complex III dimer, but the persistence of UQCRFS1-derived fragments may prevent newly imported UQCRFS1 to be processed and assembled into complex III and is detrimental for the complex III structure and function. The chain is Cytochrome b-c1 complex subunit Rieske, mitochondrial (UQCRFS1) from Colobus polykomos (Western black-and-white colobus monkey).